The following is a 943-amino-acid chain: Isoleucine--tRNA ligase (943 aa).

Positions 59–69 match the 'HIGH' region motif; sequence PYANGQIHLGH. An L-isoleucyl-5'-AMP-binding site is contributed by E577. The 'KMSKS' region motif lies at 618–622; the sequence is KMSKS. Residue K621 participates in ATP binding. 4 residues coordinate Zn(2+): C906, C909, C926, and C929.

It belongs to the class-I aminoacyl-tRNA synthetase family. IleS type 1 subfamily. In terms of assembly, monomer. It depends on Zn(2+) as a cofactor.

The protein resides in the cytoplasm. The catalysed reaction is tRNA(Ile) + L-isoleucine + ATP = L-isoleucyl-tRNA(Ile) + AMP + diphosphate. In terms of biological role, catalyzes the attachment of isoleucine to tRNA(Ile). As IleRS can inadvertently accommodate and process structurally similar amino acids such as valine, to avoid such errors it has two additional distinct tRNA(Ile)-dependent editing activities. One activity is designated as 'pretransfer' editing and involves the hydrolysis of activated Val-AMP. The other activity is designated 'posttransfer' editing and involves deacylation of mischarged Val-tRNA(Ile). This is Isoleucine--tRNA ligase from Xylella fastidiosa (strain M12).